The chain runs to 791 residues: Major facilitator superfamily domain-containing protein 6 (791 aa).

A2 carries the N-acetylalanine modification. At T10 the chain carries Phosphothreonine. The tract at residues L22 to S47 is disordered. The span at S37–S47 shows a compositional bias: low complexity. Helical transmembrane passes span V73–Y93, L105–A125, K132–V152, A286–V306, W335–I355, and Q369–F389. A disordered region spans residues E407–T427. Positions S416 to T427 are enriched in low complexity. Helical transmembrane passes span V450–W470, T479–F499, I507–I527, G544–P564, L579–A599, and G605–V625. 2 disordered regions span residues M662–A687 and L723–H791. The span at S750–A768 shows a compositional bias: polar residues. Over residues Q782–H791 the composition is skewed to low complexity.

It belongs to the major facilitator superfamily. MFSD6 family. As to quaternary structure, may interact with HLA-B62. Widely expressed. Expression levels in peripheral blood mononuclear cells are highly variable between individuals, including no expression at all.

It is found in the membrane. The protein is Major facilitator superfamily domain-containing protein 6 (MFSD6) of Homo sapiens (Human).